The sequence spans 143 residues: Nucleoside diphosphate kinase (143 aa).

ATP-binding residues include lysine 11, phenylalanine 59, arginine 87, threonine 93, arginine 104, and asparagine 114. The Pros-phosphohistidine intermediate role is filled by histidine 117.

It belongs to the NDK family. In terms of assembly, homotetramer. Requires Mg(2+) as cofactor.

It is found in the cytoplasm. It catalyses the reaction a 2'-deoxyribonucleoside 5'-diphosphate + ATP = a 2'-deoxyribonucleoside 5'-triphosphate + ADP. It carries out the reaction a ribonucleoside 5'-diphosphate + ATP = a ribonucleoside 5'-triphosphate + ADP. Major role in the synthesis of nucleoside triphosphates other than ATP. The ATP gamma phosphate is transferred to the NDP beta phosphate via a ping-pong mechanism, using a phosphorylated active-site intermediate. The polypeptide is Nucleoside diphosphate kinase (Shewanella loihica (strain ATCC BAA-1088 / PV-4)).